Here is a 464-residue protein sequence, read N- to C-terminus: ATP synthase subunit beta (464 aa).

ATP is bound at residue 154-161 (GGAGVGKT).

Belongs to the ATPase alpha/beta chains family. F-type ATPases have 2 components, CF(1) - the catalytic core - and CF(0) - the membrane proton channel. CF(1) has five subunits: alpha(3), beta(3), gamma(1), delta(1), epsilon(1). CF(0) has three main subunits: a(1), b(2) and c(9-12). The alpha and beta chains form an alternating ring which encloses part of the gamma chain. CF(1) is attached to CF(0) by a central stalk formed by the gamma and epsilon chains, while a peripheral stalk is formed by the delta and b chains.

The protein resides in the cell membrane. The enzyme catalyses ATP + H2O + 4 H(+)(in) = ADP + phosphate + 5 H(+)(out). In terms of biological role, produces ATP from ADP in the presence of a proton gradient across the membrane. The catalytic sites are hosted primarily by the beta subunits. The polypeptide is ATP synthase subunit beta (Mycoplasmopsis synoviae (strain 53) (Mycoplasma synoviae)).